Consider the following 212-residue polypeptide: uncharacterized protein (212 aa).

This is an uncharacterized protein from Acanthamoeba polyphaga (Amoeba).